Consider the following 1758-residue polypeptide: Condensin-2 complex subunit hcp-6 (1758 aa).

Disordered regions lie at residues 428-501 (DPGA…KAKE), 969-1008 (ENGSSDASTVNPDMPSVHHTRPPTQLSEVPSSQKSSKGGM), 1379-1460 (QKRL…ARLL), and 1500-1656 (SKQA…LSRG). Residues 438 to 462 (EQNEEEDEEEEGEDEEEEEENEQDD) show a composition bias toward acidic residues. Basic and acidic residues predominate over residues 463-473 (VAVKEEEQSDK). Residues 474–484 (SDEENDGDNEE) are compositionally biased toward acidic residues. Positions 485–501 (NVSKKKEEKKKEKKAKE) are enriched in basic and acidic residues. Residues 969 to 979 (ENGSSDASTVN) are compositionally biased toward polar residues. Residues 999–1008 (SSQKSSKGGM) are compositionally biased toward low complexity. Positions 1326-1385 (CIEHKNDIDEILQDNRQLKDEMMFELQRVKQRTEEANRILDEYLKRVAEFKKQQKRLSKS) form a coiled coil. Residues 1414-1423 (EDQENVEEEV) are compositionally biased toward acidic residues. 2 stretches are compositionally biased toward basic and acidic residues: residues 1424–1437 (EMRTPQKKNPDADV) and 1500–1512 (SKQADKTEEKTIV). Polar residues-rich tracts occupy residues 1602–1618 (ISANVTLRRSRRGQSTE) and 1640–1651 (VPTSSSGNTEND).

In terms of assembly, component of the condensin-2 complex.

It localises to the nucleus. Its subcellular location is the chromosome. The protein resides in the centromere. In terms of biological role, chromosomal protein which is recruited to mitotic chromosomes by hcp-3 (CENP-A) and hcp-4 (CENP-C). Involved in chromosome segregation during mitosis, playing a role in chromosome condensation and in maintaining chromosome morphology, rigidity and orientation during mitosis. This is Condensin-2 complex subunit hcp-6 from Caenorhabditis elegans.